The chain runs to 89 residues: UPF0335 protein RPE_4107 (89 aa).

This sequence belongs to the UPF0335 family.

This chain is UPF0335 protein RPE_4107, found in Rhodopseudomonas palustris (strain BisA53).